The sequence spans 313 residues: Ethylene-responsive transcription factor ERN2 (313 aa).

Residues Met1–Lys10 are compositionally biased toward basic and acidic residues. A disordered region spans residues Met1–Thr29. The segment covering Ser11–Asn24 has biased composition (basic residues). The segment at residues Lys32–Val89 is a DNA-binding region (AP2/ERF). Disordered regions lie at residues Asn108 to Thr143 and Thr157 to Thr204. 2 stretches are compositionally biased toward low complexity: residues Ser122–Thr143 and Thr157–Asn193.

Belongs to the AP2/ERF transcription factor family. ERF subfamily. Expressed in roots, root hairs and leaves. Expressed in root epidermis and root hairs.

The protein resides in the nucleus. In terms of biological role, transcription factor involved in symbiotic nodule signaling in response to rhizobial Nod factors (NFs). Binds to the GCC box (NF-responsive box) of ENOD11 promoter. Acts as a transcriptional activator of NF-responsive box-containing target gene promoters in root hairs. Involved in early stages of root nodule development. Functions redundantly with ERN1. Is essential with ERN1 for the initiation of root hair infection, and nodule organogenesis and development. Required for accurate expression of the NF signaling genes ENOD11 and ENOD12. The sequence is that of Ethylene-responsive transcription factor ERN2 from Medicago truncatula (Barrel medic).